Reading from the N-terminus, the 79-residue chain is Defensin 2 (79 aa).

A signal peptide spans 1-32; sequence VQKRTIIMEKKMAGFCIFFLILFLAQEYGVEG. 3 disulfide bridges follow: C35-C79, C46-C67, and C52-C73.

Belongs to the DEFL family. May form dimers. Post-translationally, not glycosylated. In terms of processing, has 4 disulfide bonds.

Probably has antifungal activity. This chain is Defensin 2, found in Arachis hypogaea (Peanut).